A 110-amino-acid chain; its full sequence is N(4)-acetylcytidine amidohydrolase (110 aa).

Positions 6–93 (TFFERFEQDI…IQEIYPGLEQ (88 aa)) constitute an ASCH domain. Lys-20 serves as the catalytic Proton acceptor. The active-site Nucleophile is the Thr-23. Catalysis depends on Glu-73, which acts as the Proton donor.

It belongs to the N(4)-acetylcytidine amidohydrolase family.

The enzyme catalyses N(4)-acetylcytidine + H2O = cytidine + acetate + H(+). It catalyses the reaction N(4)-acetyl-2'-deoxycytidine + H2O = 2'-deoxycytidine + acetate + H(+). It carries out the reaction N(4)-acetylcytosine + H2O = cytosine + acetate + H(+). In terms of biological role, catalyzes the hydrolysis of N(4)-acetylcytidine (ac4C). This is N(4)-acetylcytidine amidohydrolase from Shewanella sp. (strain ANA-3).